The chain runs to 525 residues: uncharacterized protein (525 aa).

Helical transmembrane passes span 36-56 and 61-81; these read AVAAVSLTALPIVPLALTLAL and ALPAGAALWASASLLAAAAAI. Positions 173-228 constitute a PAC domain; it reads SAVDIRLERTSADGPQFAHIYCEMTPLRDAEGNLLAIVAQSRDVSEEARLQAEAAA. The Histidine kinase domain maps to 246–466; sequence AVSHELRTPL…VIVVTIPSDA (221 aa). Position 249 is a phosphohistidine; by autocatalysis (His-249). The segment at 506–525 is disordered; that stretch reads LHTGEIGREGGHGAAQAKTA.

It is found in the cell membrane. The enzyme catalyses ATP + protein L-histidine = ADP + protein N-phospho-L-histidine.. This is an uncharacterized protein from Rhizobium meliloti (strain 1021) (Ensifer meliloti).